We begin with the raw amino-acid sequence, 48 residues long: Lantibiotic salivaricin-A (48 aa).

Positions 1–26 (MKNSKDILNNAIEEVSEKELMEVAGG) are excised as a propeptide. Cross-links (beta-methyllanthionine (Thr-Cys)) lie at residues 35-40 (TITDDC) and 37-47 (TDDCPNSVFVC). The lanthionine (Ser-Cys) cross-link spans 43–48 (SVFVCC).

The protein belongs to the type A lantibiotic family. Post-translationally, maturation of lantibiotics involves the enzymatic conversion of Thr, and Ser into dehydrated AA and the formation of thioether bonds with cysteine. This is followed by membrane translocation and cleavage of the modified precursor.

Its function is as follows. Lanthionine-containing peptide antibiotic (lantibiotic) active on Gram-positive bacteria. The bactericidal activity of lantibiotics is based on depolarization of energized bacterial cytoplasmic membranes, initiated by the formation of aqueous transmembrane pores. This is Lantibiotic salivaricin-A (salA) from Streptococcus salivarius.